The primary structure comprises 276 residues: Inositol-1-monophosphatase ImpA (276 aa).

The Mg(2+) site is built by Glu74, Asp90, Ile92, and Asp93. Substrate is bound at residue Glu74. Residues Ile92–Thr95, Arg192, and Asp221 each bind substrate. Residue Asp221 coordinates Mg(2+).

The protein belongs to the inositol monophosphatase superfamily. The cofactor is Mg(2+).

The catalysed reaction is a myo-inositol phosphate + H2O = myo-inositol + phosphate. It participates in polyol metabolism; myo-inositol biosynthesis; myo-inositol from D-glucose 6-phosphate: step 2/2. Its function is as follows. Catalyzes the dephosphorylation of inositol 1-phosphate (I-1-P) to yield free myo-inositol, a key metabolite in mycobacteria. This Mycolicibacterium smegmatis (strain ATCC 700084 / mc(2)155) (Mycobacterium smegmatis) protein is Inositol-1-monophosphatase ImpA (impA).